A 126-amino-acid chain; its full sequence is Profilin-1B (126 aa).

The tract at residues 2–36 (SWQTYVDTNLVGTGAVTQAAILGLDGNTWATSAGF) is actin binding. At Lys-104 the chain carries N6,N6,N6-trimethyllysine.

Belongs to the profilin family. In terms of assembly, occurs in many kinds of cells as a complex with monomeric actin in a 1:1 ratio.

It localises to the cytoplasm. The protein resides in the cytoskeleton. Functionally, binds to actin and affects the structure of the cytoskeleton. At high concentrations, profilin prevents the polymerization of actin, whereas it enhances it at low concentrations. By binding to PIP2, it inhibits the formation of IP3 and DG. This is Profilin-1B from Acanthamoeba castellanii (Amoeba).